Reading from the N-terminus, the 1755-residue chain is Transposon Ty1-JR2 Gag-Pol polyprotein (1755 aa).

Residues 1–16 (MESQQLSQHSHISHGS) show a composition bias toward low complexity. 3 disordered regions span residues 1–93 (MESQ…MMTQ), 126–173 (PQSQ…RPPP), and 352–421 (GSRN…SKST). Polar residues-rich tracts occupy residues 48–60 (TKAN…TPAS), 71–93 (SPQT…MMTQ), and 127–152 (QSQF…GNTF). Low complexity predominate over residues 153-165 (TDSSSADSDMTST). The segment at 299 to 401 (NNGIHINNKV…NSKSKTARAH (103 aa)) is RNA-binding. Over residues 402-418 (NVSTSNNSPSTDNDSIS) the composition is skewed to low complexity. Ser-416 is subject to Phosphoserine. The For protease activity; shared with dimeric partner role is filled by Asp-461. An integrase-type zinc finger-like region spans residues 583 to 640 (NVHTSESTRKYPYPFIHRMLAHANAQTIRYSLKNNTITYFNESDVDWSSAIDYQCPDC). The 176-residue stretch at 660-835 (NSYEPFQYLH…AGLDISTLLP (176 aa)) folds into the Integrase catalytic domain. The Mg(2+) site is built by Asp-671 and Asp-736. 3 disordered regions span residues 956–1087 (SKAV…ETEK), 1092–1111 (RSPS…NIVP), and 1130–1186 (DLPL…EDNE). A compositionally biased stretch (low complexity) spans 960-969 (SPTDSTPPST). The segment covering 1005–1015 (STPQISNIEST) has biased composition (polar residues). Positions 1038–1053 (ESSHASKSKDFRHSDS) are enriched in basic and acidic residues. Polar residues-rich tracts occupy residues 1054 to 1082 (YSEN…QISD) and 1101 to 1111 (PENNSSHNIVP). Positions 1178-1212 (KKRSLEDNETEIKVSRDTWNTKNMRSLEPPRSKKR) match the Bipartite nuclear localization signal motif. Residues 1338 to 1476 (NNYYITQLDI…DILGLEIKYQ (139 aa)) form the Reverse transcriptase Ty1/copia-type domain. 6 residues coordinate Mg(2+): Asp-1346, Asp-1427, Asp-1428, Asp-1610, Glu-1652, and Asp-1685. Residues 1610–1752 (DASYGNQPYY…IKTFKLLTNK (143 aa)) form the RNase H Ty1/copia-type domain.

In terms of assembly, the capsid protein forms a homotrimer, from which the VLPs are assembled. The protease is a homodimer, whose active site consists of two apposed aspartic acid residues. Initially, virus-like particles (VLPs) are composed of the structural unprocessed proteins Gag and Gag-Pol, and also contain the host initiator methionine tRNA (tRNA(i)-Met) which serves as a primer for minus-strand DNA synthesis, and a dimer of genomic Ty RNA. Processing of the polyproteins occurs within the particle and proceeds by an ordered pathway, called maturation. First, the protease (PR) is released by autocatalytic cleavage of the Gag-Pol polyprotein yielding capsid protein p45 and a Pol-p154 precursor protein. This cleavage is a prerequisite for subsequent processing of Pol-p154 at the remaining sites to release the mature structural and catalytic proteins. Maturation takes place prior to the RT reaction and is required to produce transposition-competent VLPs.

The protein localises to the cytoplasm. It localises to the nucleus. It catalyses the reaction DNA(n) + a 2'-deoxyribonucleoside 5'-triphosphate = DNA(n+1) + diphosphate. It carries out the reaction Endonucleolytic cleavage to 5'-phosphomonoester.. Its function is as follows. Capsid protein (CA) is the structural component of the virus-like particle (VLP), forming the shell that encapsulates the retrotransposons dimeric RNA genome. The particles are assembled from trimer-clustered units and there are holes in the capsid shells that allow for the diffusion of macromolecules. CA also has nucleocapsid-like chaperone activity, promoting primer tRNA(i)-Met annealing to the multipartite primer-binding site (PBS), dimerization of Ty1 RNA and initiation of reverse transcription. Functionally, the aspartyl protease (PR) mediates the proteolytic cleavages of the Gag and Gag-Pol polyproteins after assembly of the VLP. Reverse transcriptase/ribonuclease H (RT) is a multifunctional enzyme that catalyzes the conversion of the retro-elements RNA genome into dsDNA within the VLP. The enzyme displays a DNA polymerase activity that can copy either DNA or RNA templates, and a ribonuclease H (RNase H) activity that cleaves the RNA strand of RNA-DNA heteroduplexes during plus-strand synthesis and hydrolyzes RNA primers. The conversion leads to a linear dsDNA copy of the retrotransposon that includes long terminal repeats (LTRs) at both ends. In terms of biological role, integrase (IN) targets the VLP to the nucleus, where a subparticle preintegration complex (PIC) containing at least integrase and the newly synthesized dsDNA copy of the retrotransposon must transit the nuclear membrane. Once in the nucleus, integrase performs the integration of the dsDNA into the host genome. In Saccharomyces cerevisiae (strain ATCC 204508 / S288c) (Baker's yeast), this protein is Transposon Ty1-JR2 Gag-Pol polyprotein (TY1B-JR2).